A 207-amino-acid chain; its full sequence is MNNLTAIVLAGGQSSRMGQDKALITVQGVPLLQFVCNIAASCADTVYIVTPWPERYEHLFLPGCKFLPEAATQGPLIGFAQGLAEVKSEWVLLLACDLPKLRVEVLQEWAANLDSVPEEAIAALPHHAKGWEPLCGFYRRRCLPQLLEFIHQGGRSFQQWLQHHSVQVLSLPTPEILFNCNTPEDLAVIQGEFDDLSPNPSPTRRGA.

GTP is bound by residues 9–11 (LAG), lysine 21, and aspartate 97. Aspartate 97 serves as a coordination point for Mg(2+).

Belongs to the MobA family. Mg(2+) is required as a cofactor.

The protein localises to the cytoplasm. It catalyses the reaction Mo-molybdopterin + GTP + H(+) = Mo-molybdopterin guanine dinucleotide + diphosphate. Functionally, transfers a GMP moiety from GTP to Mo-molybdopterin (Mo-MPT) cofactor (Moco or molybdenum cofactor) to form Mo-molybdopterin guanine dinucleotide (Mo-MGD) cofactor. The sequence is that of Probable molybdenum cofactor guanylyltransferase from Nostoc sp. (strain PCC 7120 / SAG 25.82 / UTEX 2576).